A 140-amino-acid polypeptide reads, in one-letter code: Large-conductance mechanosensitive channel (140 aa).

A run of 2 helical transmembrane segments spans residues 16–36 (VIDL…VTAL) and 84–104 (INTV…VKLI).

This sequence belongs to the MscL family. In terms of assembly, homopentamer.

The protein resides in the cell inner membrane. Channel that opens in response to stretch forces in the membrane lipid bilayer. May participate in the regulation of osmotic pressure changes within the cell. The polypeptide is Large-conductance mechanosensitive channel (Xanthomonas oryzae pv. oryzae (strain PXO99A)).